A 261-amino-acid chain; its full sequence is Potassium/proton antiporter CemA (261 aa).

Transmembrane regions (helical) follow at residues 138 to 158 (IISH…YLIL), 184 to 204 (FLIL…GWEL), and 221 to 241 (IISG…KYWI).

The protein belongs to the CemA family.

It localises to the plastid. Its subcellular location is the chloroplast inner membrane. It catalyses the reaction K(+)(in) + H(+)(out) = K(+)(out) + H(+)(in). In terms of biological role, contributes to K(+)/H(+) antiport activity by supporting proton efflux to control proton extrusion and homeostasis in chloroplasts in a light-dependent manner to modulate photosynthesis. Prevents excessive induction of non-photochemical quenching (NPQ) under continuous-light conditions. Indirectly promotes efficient inorganic carbon uptake into chloroplasts. The sequence is that of Potassium/proton antiporter CemA from Pinus koraiensis (Korean pine).